The primary structure comprises 813 residues: LPS-assembly protein LptD (813 aa).

Residues 1–29 (MTEQRRSPNNRALPSPAPTSVPARARRAG) form a disordered region. The first 52 residues, 1–52 (MTEQRRSPNNRALPSPAPTSVPARARRAGGLHAGALRPLVLAMASLSAGAHA), serve as a signal peptide directing secretion.

Belongs to the LptD family. Component of the lipopolysaccharide transport and assembly complex. Interacts with LptE and LptA.

It localises to the cell outer membrane. In terms of biological role, together with LptE, is involved in the assembly of lipopolysaccharide (LPS) at the surface of the outer membrane. The polypeptide is LPS-assembly protein LptD (Cupriavidus necator (strain ATCC 17699 / DSM 428 / KCTC 22496 / NCIMB 10442 / H16 / Stanier 337) (Ralstonia eutropha)).